We begin with the raw amino-acid sequence, 78 residues long: Neurogranin (78 aa).

Residue Met-1 is modified to N-acetylmethionine. Residues 26 to 49 enclose the IQ domain; sequence ANAAAAKIQASFRGHMARKKIKSG. Ser-36 bears the Phosphoserine; by PHK and PKC mark. A disordered region spans residues 38–78; sequence RGHMARKKIKSGERGRKGPGPGGPGGAGGARGGAGGGPSGD. One can recognise a Collagen-like domain in the interval 50 to 78; that stretch reads ERGRKGPGPGGPGGAGGARGGAGGGPSGD. Gly residues predominate over residues 55-78; it reads GPGPGGPGGAGGARGGAGGGPSGD. The residue at position 68 (Arg-68) is a Citrulline; partial. Residue Arg-68 is modified to Omega-N-methylarginine.

This sequence belongs to the neurogranin family. Post-translationally, the N-terminus is blocked. In terms of processing, phosphorylated at Ser-36 by PHK and PKC. Phosphorylation prevents interaction with Calmodulin and interrupts several learning- and memory-associated functions. Is highly enriched in brain. Accumulates postsynaptically in dendritic spines of neostriatal neurons.

Functionally, acts as a 'third messenger' substrate of protein kinase C-mediated molecular cascades during synaptic development and remodeling. Binds to calmodulin in the absence of calcium. The protein is Neurogranin (NRGN) of Bos taurus (Bovine).